The sequence spans 454 residues: Transmembrane protease serine 3 (454 aa).

At 1–48 (MGENDPPAVEAPFSFRSLFGLDDLKISPVAPDADAVAAQILSLLPLKF) the chain is on the cytoplasmic side. Residues 49-69 (FPIIVIGIIALILALAIGLGI) form a helical; Signal-anchor for type II membrane protein membrane-spanning segment. The Extracellular portion of the chain corresponds to 70-454 (HFDCSGKYRC…HEQMERDLKT (385 aa)). One can recognise an LDL-receptor class A domain in the interval 72-108 (DCSGKYRCRSSFKCIELIARCDGVSDCKDGEDEYRCV). Disulfide bonds link Cys73/Cys85, Cys79/Cys98, Cys92/Cys107, Cys129/Cys194, Cys142/Cys204, Cys207/Cys324, Cys242/Cys258, Cys338/Cys407, Cys370/Cys386, and Cys397/Cys425. Residues 109-205 (RVGGQNAVLQ…SGHVVTLQCT (97 aa)) form the SRCR domain. The Peptidase S1 domain occupies 217–449 (IVGGNMSLLS…FLDWIHEQME (233 aa)). An N-linked (GlcNAc...) asparagine glycan is attached at Asn221. Active-site charge relay system residues include His257 and Asp304. The Charge relay system role is filled by Ser401.

It belongs to the peptidase S1 family. Undergoes autoproteolytic activation. Expressed in many tissues including fetal cochlea. Isoform T is found at increased levels in some carcinomas.

It localises to the endoplasmic reticulum membrane. In terms of biological role, probable serine protease that plays a role in hearing. Acts as a permissive factor for cochlear hair cell survival and activation at the onset of hearing and is required for saccular hair cell survival. Activates ENaC (in vitro). The sequence is that of Transmembrane protease serine 3 (TMPRSS3) from Homo sapiens (Human).